The primary structure comprises 298 residues: Acetate permease A (298 aa).

The tract at residues 1 to 43 (MSAEQNHGLEKDVGGPAAPAAAAPNAPAAAPGAPPAGMSAEEH) is disordered. The segment covering 14–37 (GGPAAPAAAAPNAPAAAPGAPPAG) has biased composition (low complexity). 6 consecutive transmembrane segments (helical) span residues 86-106 (APLGLSAFALTTFVLSCINMG), 115-135 (IVIALAFGYGGLVQLLAGMWE), 146-166 (ALSSYGGFWIAFAIVLTPGGF), 185-205 (SFGLFLMGWFIFTTIMLFCTL), 210-230 (AFFLLFLFLDLAFLLLGVGYI), and 245-265 (AGGFFGLLAAFAAWYNALAGI).

This sequence belongs to the acetate uptake transporter (AceTr) (TC 2.A.96) family.

It localises to the cell membrane. The protein localises to the vacuole membrane. Its function is as follows. High affinity monocarboxylate transporter (MCT) involved in acetate uptake. Unlike other activities involved in acetate utilization, acpA is dispensable for growth on the acetate precursor ethanol. This Emericella nidulans (strain FGSC A4 / ATCC 38163 / CBS 112.46 / NRRL 194 / M139) (Aspergillus nidulans) protein is Acetate permease A.